A 153-amino-acid polypeptide reads, in one-letter code: Regulatory protein RecX (153 aa).

Belongs to the RecX family.

Its subcellular location is the cytoplasm. Its function is as follows. Modulates RecA activity. The chain is Regulatory protein RecX from Vibrio vulnificus (strain CMCP6).